The chain runs to 145 residues: Large ribosomal subunit protein uL13 (145 aa).

The protein belongs to the universal ribosomal protein uL13 family. Part of the 50S ribosomal subunit.

In terms of biological role, this protein is one of the early assembly proteins of the 50S ribosomal subunit, although it is not seen to bind rRNA by itself. It is important during the early stages of 50S assembly. This Staphylococcus aureus (strain Mu3 / ATCC 700698) protein is Large ribosomal subunit protein uL13.